The sequence spans 208 residues: MISDIEFALSEHNFQFAYKDLQKINLYIKRILLLNTRFNLISNSNSNFNSILNLHVIDSLLGLSTVKEINPSEVLDVGSGAGFPGIILAIFDTSRKYYLLERSKKKSTFLKMIKLELDLENVKILEYEIEKEKKKYEFITIRAFRSMNEYALILKNLLKGGGLIMAYKGKFDRINLEVNQIKNLFSKIEVKSLNSKLRVDRNLVLLYR.

S-adenosyl-L-methionine is bound by residues Gly78, Phe83, 101 to 103 (ERS), 129 to 130 (IE), and Arg142.

Belongs to the methyltransferase superfamily. RNA methyltransferase RsmG family.

Its subcellular location is the cytoplasm. Specifically methylates the N7 position of a guanine in 16S rRNA. This Borreliella burgdorferi (strain ZS7) (Borrelia burgdorferi) protein is Ribosomal RNA small subunit methyltransferase G.